The chain runs to 483 residues: Probable Xaa-Pro aminopeptidase MCYG_06503 (483 aa).

The Mn(2+) site is built by D233, D244, E409, and E453.

This sequence belongs to the peptidase M24B family. Mn(2+) serves as cofactor.

It carries out the reaction Release of any N-terminal amino acid, including proline, that is linked to proline, even from a dipeptide or tripeptide.. Catalyzes the removal of a penultimate prolyl residue from the N-termini of peptides. This is Probable Xaa-Pro aminopeptidase MCYG_06503 from Arthroderma otae (strain ATCC MYA-4605 / CBS 113480) (Microsporum canis).